A 425-amino-acid polypeptide reads, in one-letter code: Paired box pox-neuro protein (425 aa).

Positions 5 to 132 (GQAGVNQLGG…SSINRILRNS (128 aa)) form a DNA-binding region, paired. The interval 8 to 64 (GVNQLGGVFVNGRPLPDCVRRRIVDLALCGVRPCDISRQLLVSHGCVSKILTRFYET) is PAI subdomain. Residues 84–132 (TVVKKIIRLKEENSGMFAWEIREQLQQQRVCDPSSVPSISSINRILRNS) are RED subdomain. 3 disordered regions span residues 159–188 (QAGSGPSNGYGGQAPPPPVTVAPPTPAATP), 297–358 (TKSE…RKRN), and 383–425 (LESS…EVVN). The span at 172 to 185 (APPPPVTVAPPTPA) shows a compositional bias: pro residues. Composition is skewed to low complexity over residues 323–332 (SSPAALSLTA) and 340–349 (GSAPEASPGS). Residues 402–425 (TPEDEDPAEAEEEQEEEDSVEVVN) show a composition bias toward acidic residues.

Central and peripheral nervous systems.

It is found in the nucleus. Transcriptional regulator that specifies poly-innervated organs (chemosensory bristle). Also controls the number of neurons. The chain is Paired box pox-neuro protein (Poxn) from Drosophila melanogaster (Fruit fly).